The following is a 234-amino-acid chain: Protein rgg8 (234 aa).

The protein localises to the cytoplasm. It localises to the nucleus. This chain is Protein rgg8 (rgg8), found in Schizosaccharomyces pombe (strain 972 / ATCC 24843) (Fission yeast).